Here is a 76-residue protein sequence, read N- to C-terminus: U-scoloptoxin(15)-Ssd3b (76 aa).

The N-terminal stretch at 1–23 is a signal peptide; it reads MEKKIIFLCFLVALLTFPEFISS.

In terms of processing, contains 2 disulfide bonds. As to expression, expressed by the venom gland.

The protein localises to the secreted. In Scolopendra dehaani (Thai centipede), this protein is U-scoloptoxin(15)-Ssd3b.